The sequence spans 514 residues: Maturase K (514 aa).

The protein belongs to the intron maturase 2 family. MatK subfamily.

It is found in the plastid. It localises to the chloroplast. Its function is as follows. Usually encoded in the trnK tRNA gene intron. Probably assists in splicing its own and other chloroplast group II introns. The polypeptide is Maturase K (Acer palmatum (Japanese maple)).